Here is a 406-residue protein sequence, read N- to C-terminus: MAAFEYKALDAKGRHKKGVIEGDNARQVRQRLKEQSLVPMEVVETQVKAARSRSQGFAFKRGISTPDLALITRQLATLVQSGMPLEECLRAVAEQSEKPRIRTMLVAVRAKVTEGYTLSDSLGDYPHVFDELFRSMVAAGEKSGHLDSVLERLADYAENRQKMRSKLQQAMIYPVVLVVFAVGIVAFLLAAVVPKIVGQFVQMGQALPASTQFLLDASDFLQHWGISLLVGLLMLIYLVRWLLTKPDIRLRWDRRVISLPVIGKIARGLNTARFARTLSICTSSAIPILDGMRVAVDVMTNQFVKQQVLAAAENVREGSSLRKALEQTKLFPPMMLHMIASGEQSGELEGMLTRAADNQDNSFESTVNIALGIFTPALIALMAGMVLFIVMATLMPILEMNNLMSR.

Over 1-171 (MAAFEYKALD…KMRSKLQQAM (171 aa)) the chain is Cytoplasmic. Glutamate 97, glutamate 151, and aspartate 155 together coordinate Ca(2+). The helical transmembrane segment at 172–192 (IYPVVLVVFAVGIVAFLLAAV) threads the bilayer. Topologically, residues 193–223 (VPKIVGQFVQMGQALPASTQFLLDASDFLQH) are periplasmic. A helical membrane pass occupies residues 224-244 (WGISLLVGLLMLIYLVRWLLT). The Cytoplasmic portion of the chain corresponds to 245 to 368 (KPDIRLRWDR…QDNSFESTVN (124 aa)). Residues 369–389 (IALGIFTPALIALMAGMVLFI) traverse the membrane as a helical segment. Residues 390-406 (VMATLMPILEMNNLMSR) are Periplasmic-facing.

The protein belongs to the GSP F family. Type II secretion system is composed of four main components: the outer membrane complex, the inner membrane complex, the cytoplasmic secretion ATPase and the periplasm-spanning pseudopilus. Homodimer. Interacts with EpsE/GspE and EpsL/GspL components.

The protein localises to the cell inner membrane. In terms of biological role, component of the type II secretion system inner membrane complex required for the energy-dependent secretion of extracellular factors such as proteases and toxins from the periplasm. The protein is Type II secretion system protein F (epsF) of Vibrio cholerae serotype O1 (strain ATCC 39315 / El Tor Inaba N16961).